Here is a 210-residue protein sequence, read N- to C-terminus: Orotate phosphoribosyltransferase (210 aa).

5-phospho-alpha-D-ribose 1-diphosphate is bound by residues Arg96, Lys100, His102, and Glu122–Ser130. Ser126 is an orotate binding site.

This sequence belongs to the purine/pyrimidine phosphoribosyltransferase family. PyrE subfamily. Homodimer. Mg(2+) is required as a cofactor.

The catalysed reaction is orotidine 5'-phosphate + diphosphate = orotate + 5-phospho-alpha-D-ribose 1-diphosphate. Its pathway is pyrimidine metabolism; UMP biosynthesis via de novo pathway; UMP from orotate: step 1/2. Its function is as follows. Catalyzes the transfer of a ribosyl phosphate group from 5-phosphoribose 1-diphosphate to orotate, leading to the formation of orotidine monophosphate (OMP). The chain is Orotate phosphoribosyltransferase from Streptococcus pneumoniae serotype 4 (strain ATCC BAA-334 / TIGR4).